Here is a 911-residue protein sequence, read N- to C-terminus: Protein translocase subunit SecA (911 aa).

Residues Q86, G104 to T108, and D494 contribute to the ATP site. Residues V856–G911 form a disordered region. Polar residues predominate over residues D876–G889. Residues R902–G911 show a composition bias toward basic and acidic residues.

The protein belongs to the SecA family. As to quaternary structure, monomer and homodimer. Part of the essential Sec protein translocation apparatus which comprises SecA, SecYEG and auxiliary proteins SecDF. Other proteins may also be involved.

It is found in the cell membrane. The protein localises to the cytoplasm. The enzyme catalyses ATP + H2O + cellular proteinSide 1 = ADP + phosphate + cellular proteinSide 2.. In terms of biological role, part of the Sec protein translocase complex. Interacts with the SecYEG preprotein conducting channel. Has a central role in coupling the hydrolysis of ATP to the transfer of proteins into and across the cell membrane, serving as an ATP-driven molecular motor driving the stepwise translocation of polypeptide chains across the membrane. In Micrococcus luteus (strain ATCC 4698 / DSM 20030 / JCM 1464 / CCM 169 / CCUG 5858 / IAM 1056 / NBRC 3333 / NCIMB 9278 / NCTC 2665 / VKM Ac-2230) (Micrococcus lysodeikticus), this protein is Protein translocase subunit SecA.